The primary structure comprises 140 residues: Protein S40-1 (140 aa).

The tract at residues 16–58 is disordered; the sequence is YFPIRRREDGNEKENNRPVDFRENSERVWNKSSRRSKTTPLPS. A compositionally biased stretch (basic and acidic residues) spans 20–44; it reads RRREDGNEKENNRPVDFRENSERVW.

The protein belongs to the senescence regulator S40 family.

It is found in the cytoplasm. This chain is Protein S40-1, found in Arabidopsis thaliana (Mouse-ear cress).